The following is a 100-amino-acid chain: Integration host factor subunit alpha (100 aa).

Belongs to the bacterial histone-like protein family. As to quaternary structure, heterodimer of an alpha and a beta chain.

Its function is as follows. This protein is one of the two subunits of integration host factor, a specific DNA-binding protein that functions in genetic recombination as well as in transcriptional and translational control. This chain is Integration host factor subunit alpha, found in Methylobacillus flagellatus (strain ATCC 51484 / DSM 6875 / VKM B-1610 / KT).